A 280-amino-acid chain; its full sequence is MSGAVGLVVKRRSGIAEDVARLVVKELVESGVEVLVDETVDYPSLSGFPRFSISRDPPGRVVVVGGDGTLLRTFLRLGERESPLFMTIKAGKKGFLLDVERYEAVERLRDFLEGRFREVVYPRYRVYLEGEARACMFNDTAVTANNAKMARVHVFVDGDLAMNIDGDGVVVSTTAGSTAYSLSGGGPIIDPRLDVIVLTPLNPVQLFLRSIVVPSGSRVTVEASVYSNPLVVNIDGQYVYELEPGGIVDIERCGSGVRIARFRWWEDYYERLYTRLLAYW.

Aspartate 67 functions as the Proton acceptor in the catalytic mechanism. NAD(+) is bound by residues 67–68, arginine 72, 138–139, aspartate 167, alanine 175, 178–183, and glutamine 237; these read DG, ND, and TAYSLS.

The protein belongs to the NAD kinase family. A divalent metal cation is required as a cofactor.

The protein localises to the cytoplasm. It catalyses the reaction NAD(+) + ATP = ADP + NADP(+) + H(+). Its function is as follows. Involved in the regulation of the intracellular balance of NAD and NADP, and is a key enzyme in the biosynthesis of NADP. Catalyzes specifically the phosphorylation on 2'-hydroxyl of the adenosine moiety of NAD to yield NADP. In Aeropyrum pernix (strain ATCC 700893 / DSM 11879 / JCM 9820 / NBRC 100138 / K1), this protein is NAD kinase.